A 158-amino-acid chain; its full sequence is Ankyrin repeat domain-containing protein 37 (158 aa).

3 ANK repeats span residues 1 to 25 (MLLLDCNPEVDGLKHLLETGASVNA), 30 to 59 (CKQSPVHLAAGSGLACFLLWQLQTGADLNQ), and 63 to 92 (LGEAPLHKAAKVGSLECLSLLVASDAQIDL). Positions 129–149 (EHPDRNDCVAVLRQKRSLGSV) match the Nuclear localization signal motif.

Ubiquitinated by the CRL2(FEM1B) complex, leading to its degradation. As to expression, mainly expressed in testis, small intestine, colon, blood leukocytes and in pancreatic adenocarcinoma cells.

The protein resides in the nucleus. It localises to the cytoplasm. The sequence is that of Ankyrin repeat domain-containing protein 37 from Homo sapiens (Human).